We begin with the raw amino-acid sequence, 521 residues long: Glutamyl-tRNA(Gln) amidotransferase subunit A (521 aa).

Catalysis depends on charge relay system residues lysine 79 and serine 187. Catalysis depends on serine 211, which acts as the Acyl-ester intermediate.

This sequence belongs to the amidase family. GatA subfamily. In terms of assembly, heterotrimer of A, B and C subunits.

The catalysed reaction is L-glutamyl-tRNA(Gln) + L-glutamine + ATP + H2O = L-glutaminyl-tRNA(Gln) + L-glutamate + ADP + phosphate + H(+). Functionally, allows the formation of correctly charged Gln-tRNA(Gln) through the transamidation of misacylated Glu-tRNA(Gln) in organisms which lack glutaminyl-tRNA synthetase. The reaction takes place in the presence of glutamine and ATP through an activated gamma-phospho-Glu-tRNA(Gln). The sequence is that of Glutamyl-tRNA(Gln) amidotransferase subunit A from Mesorhizobium japonicum (strain LMG 29417 / CECT 9101 / MAFF 303099) (Mesorhizobium loti (strain MAFF 303099)).